The following is a 172-amino-acid chain: MNLSKIKIGDIPNKINAVIEIPYGSNIKYEIDKDSGAIMVDRVMASAIFYPANYGFIANTLADDGDPVDILVLNEYPIQAGAVIPCRLIGVLIMEDESGMDEKLLAVPNSKIDARYDNIKTYTDLPQATLNKIKNFFETYKILEPNKWVKVQDFKDEKAAIEILEKAIKNYK.

Residues K28, R42, and Y54 each contribute to the substrate site. The Mg(2+) site is built by D64, D69, and D101. Residue Y140 coordinates substrate.

This sequence belongs to the PPase family. As to quaternary structure, homohexamer. The cofactor is Mg(2+).

It is found in the cytoplasm. The enzyme catalyses diphosphate + H2O = 2 phosphate + H(+). Functionally, catalyzes the hydrolysis of inorganic pyrophosphate (PPi) forming two phosphate ions. The protein is Inorganic pyrophosphatase of Campylobacter jejuni subsp. jejuni serotype O:2 (strain ATCC 700819 / NCTC 11168).